A 245-amino-acid polypeptide reads, in one-letter code: ATP synthase subunit a (245 aa).

Transmembrane regions (helical) follow at residues 5–25 (LWFT…MMSV), 37–57 (ISNY…FFIA), 99–119 (YIVT…IPGF), 125–145 (FPSV…VHGL), 157–177 (FLGP…CSHF), 187–209 (LYAN…PLGF), and 221–241 (SLIQ…EATA).

The protein belongs to the ATPase A chain family. In terms of assembly, F-type ATPases have 2 components, CF(1) - the catalytic core - and CF(0) - the membrane proton channel. CF(1) has five subunits: alpha(3), beta(3), gamma(1), delta(1), epsilon(1). CF(0) has three main subunits: a(1), b(2) and c(9-12). The alpha and beta chains form an alternating ring which encloses part of the gamma chain. CF(1) is attached to CF(0) by a central stalk formed by the gamma and epsilon chains, while a peripheral stalk is formed by the delta and b chains.

It localises to the cell inner membrane. In terms of biological role, key component of the proton channel; it plays a direct role in the translocation of protons across the membrane. The sequence is that of ATP synthase subunit a from Koribacter versatilis (strain Ellin345).